The following is a 251-amino-acid chain: uncharacterized protein (251 aa).

Residues 1–19 (MRYLKRITIYISLLILVSG) form the signal peptide. Cys-20 carries N-palmitoyl cysteine lipidation. Cys-20 carries S-diacylglycerol cysteine lipidation.

It belongs to the staphylococcal tandem lipoprotein family.

Its subcellular location is the cell membrane. This is an uncharacterized protein from Staphylococcus epidermidis (strain ATCC 12228 / FDA PCI 1200).